Here is a 239-residue protein sequence, read N- to C-terminus: Uridylate kinase (239 aa).

Residue 13 to 16 (KVSG) coordinates ATP. Gly-55 is a UMP binding site. Residues Gly-56 and Arg-60 each contribute to the ATP site. UMP contacts are provided by residues Asp-75 and 136-143 (TGNPFFTT). ATP-binding residues include Thr-163, Gln-164, Tyr-169, and Asp-172.

The protein belongs to the UMP kinase family. Homohexamer.

The protein localises to the cytoplasm. The enzyme catalyses UMP + ATP = UDP + ADP. Its pathway is pyrimidine metabolism; CTP biosynthesis via de novo pathway; UDP from UMP (UMPK route): step 1/1. With respect to regulation, inhibited by UTP. Catalyzes the reversible phosphorylation of UMP to UDP. The sequence is that of Uridylate kinase from Bartonella bacilliformis (strain ATCC 35685 / KC583 / Herrer 020/F12,63).